Consider the following 296-residue polypeptide: MRTLKELERELQPRQHLWYFEYYTGNNVGLFMKMNRVIYSGQSDIQRIDIFENPDLGVVFALDGITMTTEKDEFMYHEMLAHVPMFLHPNPKKVLIIGGGDGGTLREVLKHDSVEKAILCEVDGLVIEAARKYLKQTSCGFDDPRAEIVIANGAEYVRKFKNEFDVIIIDSTDPTAGQGGHLFTEEFYQACYDALKEDGVFSAETEDPFYDIGWFKLAYRRISKVFPITRVYLGFMTTYPSGMWSYTFASKGIDPIKDFDPEKVRKFNKELKYYNEEVHVASFALPNFVKKELGLM.

A PABS domain is found at 16 to 251; the sequence is HLWYFEYYTG…GMWSYTFASK (236 aa). Position 46 (Gln-46) interacts with S-methyl-5'-thioadenosine. Residues His-77 and Asp-101 each contribute to the spermidine site. S-methyl-5'-thioadenosine contacts are provided by residues Glu-121 and 152–153; that span reads NG. Asp-170 functions as the Proton acceptor in the catalytic mechanism. 170 to 173 is a spermidine binding site; that stretch reads DSTD.

The protein belongs to the spermidine/spermine synthase family. In terms of assembly, homotetramer.

It localises to the cytoplasm. The catalysed reaction is S-adenosyl 3-(methylsulfanyl)propylamine + putrescine = S-methyl-5'-thioadenosine + spermidine + H(+). It functions in the pathway amine and polyamine biosynthesis; spermidine biosynthesis; spermidine from putrescine: step 1/1. Strongly inhibited by S-adenosyl-1,8-diamino-3-thiooctane. Catalyzes the irreversible transfer of a propylamine group from the amino donor S-adenosylmethioninamine (decarboxy-AdoMet) to putrescine (1,4-diaminobutane) to yield spermidine. It has lower affinity and lower activity towards 1,3-diaminopropane, cadaverine (1,5-diaminopentane), agmatine, norspermidine and spermidine (in vitro). The sequence is that of Polyamine aminopropyltransferase from Thermotoga maritima (strain ATCC 43589 / DSM 3109 / JCM 10099 / NBRC 100826 / MSB8).